An 846-amino-acid chain; its full sequence is Patched domain-containing protein 4 (846 aa).

The next 10 helical transmembrane spans lie at 41 to 61 (HPVF…LSAL), 230 to 250 (SILA…TATL), 265 to 285 (GLLG…IFFI), 293 to 313 (TLLG…FELL), 336 to 356 (VMVT…MGAS), 373 to 393 (VSIL…LVFA), 465 to 485 (PFVV…CLQI), 660 to 680 (PVLI…FLVI), 686 to 706 (FWLI…MTLW), and 718 to 738 (LIYT…TFVL). Positions 233 to 392 (ARSKVLVSLV…FSFFGSCLVF (160 aa)) constitute an SSD domain. Residue Asn-762 is glycosylated (N-linked (GlcNAc...) asparagine). 2 helical membrane passes run 765–785 (SFLI…FTLF) and 787–807 (CLLL…PVFL).

The protein belongs to the patched family.

It localises to the membrane. Could act as a repressor of canonical hedgehog signaling by antagonizing the effects of SMO, as suggested by down-regulation of hedgehog target genes, including GLI1, PTCH1, and PTCH2 in PTCHD4-expressing cells. In Homo sapiens (Human), this protein is Patched domain-containing protein 4 (PTCHD4).